We begin with the raw amino-acid sequence, 271 residues long: MSSHADSKPWTVPALAQAKREGRKLVMLTAYDAGFARTFDANGVDLILVGDSLGMVVQGHDSTLPVTTADMVYHTASVARALDRALLVADLSFQADATPERALDAATQLLQAGAEMVKIEGAGHKLEVIRYLVEREIPVCSHLGLTPQSVLRFGGYKVQGRGEAGEQLRRDAQAVVDAGASLLVLECVPTPIATQISAELSVPTIGIGAGPGCDGQVLVMHDMLGLDSGHRRPKFVKDFLAEGGSVAGAVRAYAQAVRDGSFPDAEHAYAA.

Positions 51 and 90 each coordinate Mg(2+). Residues 51 to 52 (DS), aspartate 90, and lysine 118 contribute to the 3-methyl-2-oxobutanoate site. Residue glutamate 120 participates in Mg(2+) binding. Residue glutamate 186 is the Proton acceptor of the active site.

This sequence belongs to the PanB family. Homodecamer; pentamer of dimers. It depends on Mg(2+) as a cofactor.

The protein localises to the cytoplasm. It carries out the reaction 3-methyl-2-oxobutanoate + (6R)-5,10-methylene-5,6,7,8-tetrahydrofolate + H2O = 2-dehydropantoate + (6S)-5,6,7,8-tetrahydrofolate. The protein operates within cofactor biosynthesis; (R)-pantothenate biosynthesis; (R)-pantoate from 3-methyl-2-oxobutanoate: step 1/2. Catalyzes the reversible reaction in which hydroxymethyl group from 5,10-methylenetetrahydrofolate is transferred onto alpha-ketoisovalerate to form ketopantoate. The sequence is that of 3-methyl-2-oxobutanoate hydroxymethyltransferase from Xanthomonas axonopodis pv. citri (strain 306).